A 242-amino-acid polypeptide reads, in one-letter code: ATP synthase subunit a, chloroplastic (242 aa).

5 consecutive transmembrane segments (helical) span residues 34 to 54 (GQVL…AVLG), 93 to 113 (VPFI…GAII), 132 to 152 (INTT…AGLS), 188 to 210 (LFGN…PLVI), and 222 to 242 (GSVQ…EALE).

This sequence belongs to the ATPase A chain family. As to quaternary structure, F-type ATPases have 2 components, CF(1) - the catalytic core - and CF(0) - the membrane proton channel. CF(1) has five subunits: alpha(3), beta(3), gamma(1), delta(1), epsilon(1). CF(0) has four main subunits: a, b, b' and c.

It is found in the plastid. The protein resides in the chloroplast thylakoid membrane. Its function is as follows. Key component of the proton channel; it plays a direct role in the translocation of protons across the membrane. The protein is ATP synthase subunit a, chloroplastic of Trieres chinensis (Marine centric diatom).